The chain runs to 887 residues: Beta-galactosidase 9 (887 aa).

Residues 1–30 (MAESIRTFSLQWRILSLIIALLVYFPILSG) form the signal peptide. N-linked (GlcNAc...) asparagine glycosylation is present at Asn37. Glu194 (proton donor) is an active-site residue. Glu263 serves as the catalytic Nucleophile. Asn463, Asn485, Asn496, Asn527, and Asn785 each carry an N-linked (GlcNAc...) asparagine glycan. Positions 791–877 (NSVAPEVHLH…KTLAVMSRCS (87 aa)) constitute an SUEL-type lectin domain. N-linked (GlcNAc...) asparagine glycosylation occurs at Asn881.

It belongs to the glycosyl hydrolase 35 family. As to expression, ubiquitous, with higher expression levels in siliques.

The protein localises to the secreted. Its subcellular location is the extracellular space. It localises to the apoplast. The catalysed reaction is Hydrolysis of terminal non-reducing beta-D-galactose residues in beta-D-galactosides.. In Arabidopsis thaliana (Mouse-ear cress), this protein is Beta-galactosidase 9 (BGAL9).